An 871-amino-acid polypeptide reads, in one-letter code: Nonsense-mediated mRNA decay factor SMG8 (871 aa).

Residues 541–596 (LDDMELPESLQQSYTSSEDSSEDDDDFAIQTASSEDSLSGSDSYARPGSRRDEFES) form a disordered region. Residues 573-583 (SSEDSLSGSDS) are compositionally biased toward low complexity.

Belongs to the SMG8 family.

Its function is as follows. Involved in nonsense-mediated decay (NMD) of mRNAs containing premature stop codons. Probable component of kinase complex containing smg-1 and recruited to stalled ribosomes. The polypeptide is Nonsense-mediated mRNA decay factor SMG8 (smg-8) (Caenorhabditis briggsae).